A 266-amino-acid chain; its full sequence is MKLSLSPPPYADAPVVVLISGLGGSGSYWLPQLAVLVQEYQVVCYDQRGTGNNPDTLAEDYSIAQMAAELHQALVAAGIERYAVVGHALGALVGMQLALDYPASVTVLVSVNGWLRINAHTRRCFQVREQLLHSGGAQAWVEAQPLFLYPADWMAARAPRLEAEDALALAHFQGKNNLLRRLNALKRADFSHHADRIRCPVQIICASDDLLVPTACSSELHAALPDSQKMVMRYGGHACNVTDPETFNALLLNGLASLLHHREAAL.

Belongs to the AB hydrolase superfamily. Hydrolase RutD family.

The catalysed reaction is carbamate + 2 H(+) = NH4(+) + CO2. Involved in pyrimidine catabolism. May facilitate the hydrolysis of carbamate, a reaction that can also occur spontaneously. The protein is Putative carbamate hydrolase RutD of Escherichia coli O45:K1 (strain S88 / ExPEC).